A 212-amino-acid chain; its full sequence is MKRGLLVSLEGPDGAGKSSVLEALVPILEAQGHQVVTTREPGGVPISEAIREVILDQNNTEMDGKTELLLYIASRRQHLIEKVLPALEAGKLVIMDRFIDSSVAYQGFGRGLDVADIEWLNQYATDGLKPDLTLYFDLDVEEGLARIAKNKNREVNRLDLEGLEMHQRVRQGYLYSLEKDPERLVKIDASQALEDVVKDSLAVLNQHLNSKS.

11–18 provides a ligand contact to ATP; it reads GPDGAGKS.

This sequence belongs to the thymidylate kinase family.

It catalyses the reaction dTMP + ATP = dTDP + ADP. Functionally, phosphorylation of dTMP to form dTDP in both de novo and salvage pathways of dTTP synthesis. This is Thymidylate kinase from Streptococcus gordonii (strain Challis / ATCC 35105 / BCRC 15272 / CH1 / DL1 / V288).